Reading from the N-terminus, the 90-residue chain is Progonadoliberin-3 (90 aa).

The N-terminal stretch at 1 to 23 is a signal peptide; it reads MDVSSKVVVQVLLLALVVQVTLC. At Gln24 the chain carries Pyrrolidone carboxylic acid. Gly33 carries the post-translational modification Glycine amide.

The protein belongs to the GnRH family. Expressed in neuron cell bodies of the nucleus olfactoretinalis.

Its subcellular location is the secreted. Stimulates the secretion of gonadotropins. The polypeptide is Progonadoliberin-3 (gnrh3) (Oryzias latipes (Japanese rice fish)).